Here is a 433-residue protein sequence, read N- to C-terminus: Legumain (433 aa).

Residues 1-17 (MVWKVAVFLSVALGIGA) form the signal peptide. An N-linked (GlcNAc...) asparagine glycan is attached at asparagine 91. The active site involves histidine 148. The N-linked (GlcNAc...) asparagine glycan is linked to asparagine 167. The Nucleophile role is filled by cysteine 189. 2 N-linked (GlcNAc...) asparagine glycosylation sites follow: asparagine 263 and asparagine 272. Positions 324-433 (DLEESRQLTE…SMDHVCLGHY (110 aa)) are excised as a propeptide. 2 disulfides stabilise this stretch: cysteine 378–cysteine 412 and cysteine 390–cysteine 429.

Belongs to the peptidase C13 family. As to quaternary structure, homodimer before autocatalytic removal of the propeptide. Monomer after autocatalytic processing. May interact with integrins. In terms of processing, activated by autocatalytic processing at pH 4. Ubiquitous. Particularly abundant in kidney, heart and placenta.

It localises to the lysosome. It carries out the reaction Hydrolysis of proteins and small molecule substrates at -Asn-|-Xaa- bonds.. Its activity is regulated as follows. Inhibited by CST6. Has a strict specificity for hydrolysis of asparaginyl bonds. Can also cleave aspartyl bonds slowly, especially under acidic conditions. Involved in the processing of proteins for MHC class II antigen presentation in the lysosomal/endosomal system. Also involved in MHC class I antigen presentation in cross-presenting dendritic cells by mediating cleavage and maturation of Perforin-2 (MPEG1), thereby promoting antigen translocation in the cytosol. Required for normal lysosomal protein degradation in renal proximal tubules. Required for normal degradation of internalized EGFR. Plays a role in the regulation of cell proliferation via its role in EGFR degradation. This is Legumain from Homo sapiens (Human).